A 172-amino-acid chain; its full sequence is Ribosome maturation factor RimM (172 aa).

In terms of domain architecture, PRC barrel spans 97–170 (ENEFYFHEII…KITIEVMEGL (74 aa)).

The protein belongs to the RimM family. In terms of assembly, binds ribosomal protein uS19.

It localises to the cytoplasm. Its function is as follows. An accessory protein needed during the final step in the assembly of 30S ribosomal subunit, possibly for assembly of the head region. Essential for efficient processing of 16S rRNA. May be needed both before and after RbfA during the maturation of 16S rRNA. It has affinity for free ribosomal 30S subunits but not for 70S ribosomes. In Listeria innocua serovar 6a (strain ATCC BAA-680 / CLIP 11262), this protein is Ribosome maturation factor RimM.